A 113-amino-acid chain; its full sequence is MAKPKIKFVPDSLHVKTGDIVYVISGKDKKMTGKVLKVFPKKGKIIVEGINIVTKHLKPSQVNPQGGVVQKEAAIFSSKVMLFDEKTKSPTRVGYEVRDGKKVRISKKSGEII.

This sequence belongs to the universal ribosomal protein uL24 family. As to quaternary structure, part of the 50S ribosomal subunit.

One of two assembly initiator proteins, it binds directly to the 5'-end of the 23S rRNA, where it nucleates assembly of the 50S subunit. Functionally, one of the proteins that surrounds the polypeptide exit tunnel on the outside of the subunit. This is Large ribosomal subunit protein uL24 (rplX) from Fusobacterium nucleatum subsp. nucleatum (strain ATCC 25586 / DSM 15643 / BCRC 10681 / CIP 101130 / JCM 8532 / KCTC 2640 / LMG 13131 / VPI 4355).